The chain runs to 62 residues: Sec-independent protein translocase protein TatA (62 aa).

Residues 10 to 32 (LLIILIIVIAIFGAGKLAGLGGA) traverse the membrane as a helical segment.

It belongs to the TatA/E family. As to quaternary structure, forms a complex with TatC.

Its subcellular location is the cell membrane. In terms of biological role, part of the twin-arginine translocation (Tat) system that transports large folded proteins containing a characteristic twin-arginine motif in their signal peptide across membranes. TatA could form the protein-conducting channel of the Tat system. In Chloroflexus aurantiacus (strain ATCC 29366 / DSM 635 / J-10-fl), this protein is Sec-independent protein translocase protein TatA.